Reading from the N-terminus, the 261-residue chain is Flagellar L-ring protein (261 aa).

A signal peptide spans methionine 1 to glycine 18. Cysteine 19 is lipidated: N-palmitoyl cysteine. Cysteine 19 carries S-diacylglycerol cysteine lipidation. Residues threonine 37–proline 67 are disordered.

This sequence belongs to the FlgH family. As to quaternary structure, the basal body constitutes a major portion of the flagellar organelle and consists of four rings (L,P,S, and M) mounted on a central rod.

It is found in the cell outer membrane. It localises to the bacterial flagellum basal body. Assembles around the rod to form the L-ring and probably protects the motor/basal body from shearing forces during rotation. This is Flagellar L-ring protein from Vibrio cholerae serotype O1 (strain ATCC 39541 / Classical Ogawa 395 / O395).